A 342-amino-acid chain; its full sequence is Glucokinase (342 aa).

Position 7–12 (7–12) interacts with ATP; it reads GDIGGT.

Belongs to the bacterial glucokinase family.

It is found in the cytoplasm. The catalysed reaction is D-glucose + ATP = D-glucose 6-phosphate + ADP + H(+). The protein is Glucokinase of Trichormus variabilis (strain ATCC 29413 / PCC 7937) (Anabaena variabilis).